The chain runs to 342 residues: Cyclin pch1 (342 aa).

A disordered region spans residues 261–342; that stretch reads LPIDQKNGSH…TDKEMETEAS (82 aa). Residues 278-314 show a composition bias toward polar residues; it reads TPSSLASVSTQATPQHQNSSGRTDSFHSLNTETPSKS. A Phosphothreonine modification is found at Thr300. Phosphoserine is present on Ser302. Over residues 329-342 the composition is skewed to basic and acidic residues; that stretch reads KSSDTDKEMETEAS.

Belongs to the cyclin family. Cyclin C subfamily. As to quaternary structure, interacts with cdc2 protein kinase and with the N-terminal domain of cdk9.

The protein resides in the nucleus. Functionally, essential for progression through the whole cell cycle. This is Cyclin pch1 (pch1) from Schizosaccharomyces pombe (strain 972 / ATCC 24843) (Fission yeast).